We begin with the raw amino-acid sequence, 329 residues long: Nuclear pore complex protein NUP35 (329 aa).

2 disordered regions span residues asparagine 48 to lysine 105 and valine 123 to glutamate 167. Over residues valine 123 to threonine 139 the composition is skewed to polar residues. The RRM Nup35-type domain occupies leucine 183–alanine 264. The segment at asparagine 271–serine 315 is disordered. Residues serine 282–proline 306 are compositionally biased toward polar residues.

The protein belongs to the Nup35 family. As to quaternary structure, part of the nuclear pore complex (NPC). The NPC has an eight-fold symmetrical structure comprising a central transport channel and two rings, the cytoplasmic and nuclear rings, to which eight filaments are attached. The cytoplasmic filaments have loose ends, while the nuclear filaments are joined in a distal ring, forming a nuclear basket. NPCs are highly dynamic in configuration and composition, and can be devided in 3 subcomplexes, the NUP62 subcomplex, the NUP107-160 subcomplex and the NUP93 subcomplex, containing approximately 30 different nucleoporin proteins.

It is found in the nucleus. Its subcellular location is the nuclear pore complex. The polypeptide is Nuclear pore complex protein NUP35 (Arabidopsis thaliana (Mouse-ear cress)).